Consider the following 230-residue polypeptide: Large ribosomal subunit protein uL3 (230 aa).

Disordered regions lie at residues 125 to 149 (QAIG…SLGD) and 210 to 230 (PNPK…VKNE).

This sequence belongs to the universal ribosomal protein uL3 family. In terms of assembly, part of the 50S ribosomal subunit. Forms a cluster with proteins L14 and L19.

Functionally, one of the primary rRNA binding proteins, it binds directly near the 3'-end of the 23S rRNA, where it nucleates assembly of the 50S subunit. In Mesomycoplasma hyopneumoniae (strain J / ATCC 25934 / NCTC 10110) (Mycoplasma hyopneumoniae), this protein is Large ribosomal subunit protein uL3.